We begin with the raw amino-acid sequence, 361 residues long: Transcription factor TCP10 (361 aa).

Residues 29 to 87 (RKDRHSKVFTSKGPRDRRVRLSAHTAIQFYDVQDRLGYDRPSKAVDWLIKKAKTAIDKL) form the TCP domain. Disordered regions lie at residues 220–259 (DLTM…QPSM) and 295–317 (SWDH…SMFA). A compositionally biased stretch (basic and acidic residues) spans 295–304 (SWDHHQTTSD).

As to quaternary structure, interacts with AHP1, AHP2 and AHP3. Interacts with SPL. Mostly detected in lateral organs, such as leaves and flowers. Expressed in cotyledons, particularly in the vascular region, in leaves, roots, stems, buds, flowers and immature siliques.

It localises to the nucleus. In terms of biological role, plays a pivotal role in the control of morphogenesis of shoot organs by negatively regulating the expression of boundary-specific genes such as CUC genes, probably through the induction of miRNA (e.g. miR164). Participates in ovule development. This chain is Transcription factor TCP10 (TCP10), found in Arabidopsis thaliana (Mouse-ear cress).